The following is a 304-amino-acid chain: UPF0282 protein TSIB_1029 (304 aa).

This sequence belongs to the UPF0282 family.

The polypeptide is UPF0282 protein TSIB_1029 (Thermococcus sibiricus (strain DSM 12597 / MM 739)).